We begin with the raw amino-acid sequence, 460 residues long: Probable Xaa-Pro aminopeptidase VDBG_02538 (460 aa).

Positions 256, 267, 390, and 430 each coordinate Mn(2+).

It belongs to the peptidase M24B family. The cofactor is Mn(2+).

The enzyme catalyses Release of any N-terminal amino acid, including proline, that is linked to proline, even from a dipeptide or tripeptide.. Functionally, catalyzes the removal of a penultimate prolyl residue from the N-termini of peptides. The polypeptide is Probable Xaa-Pro aminopeptidase VDBG_02538 (Verticillium alfalfae (strain VaMs.102 / ATCC MYA-4576 / FGSC 10136) (Verticillium wilt of alfalfa)).